Consider the following 290-residue polypeptide: Plasma membrane ascorbate-dependent reductase CYBRD1 (290 aa).

The Cytoplasmic segment spans residues 1 to 7 (MAMEGYR). The helical transmembrane segment at 8–32 (GFLGLLVSALLVGFLSVIFVLIWVL) threads the bilayer. Residues 15–220 (SALLVGFLSV…FGALIFWIVT (206 aa)) enclose the Cytochrome b561 domain. The Extracellular segment spans residues 33 to 47 (HFREGLGWNGSGLEF). The chain crosses the membrane as a helical span at residues 48-69 (NWHPVLAVTGFVFIQGIAIIVY). Heme b-binding residues include His50, Arg70, and Lys79. Over 70–78 (RLPWTWKCS) the chain is Cytoplasmic. L-ascorbate is bound by residues Lys79 and Lys83. The chain crosses the membrane as a helical span at residues 79 to 105 (KLLMKSIHAGLNAVAAILAIISVVAVF). Position 86 (His86) interacts with heme b. Residues 106–118 (EYHNVQKVPHMYS) lie on the Extracellular side of the membrane. His108 contacts Fe(3+). Residues 115–118 (HMYS) and His120 contribute to the heme b site. A helical transmembrane segment spans residues 119–144 (LHSWVGLTALILYIQQLVVGFFVFLL). At 145-151 (PWAPPSL) the chain is on the cytoplasmic side. Residue Arg152 coordinates L-ascorbate. A helical membrane pass occupies residues 152–179 (RAIVMPIHVYSGLLLFGTVIATVLMGVT). 2 residues coordinate heme b: His159 and Glu180. Residues 180-197 (EKLFFVLKHPSYHSFPPE) are Extracellular-facing. A helical membrane pass occupies residues 198-222 (GVFTNTLGLLILVFGALIFWIVTRP). Over 223–290 (QWKRPREPGS…LADSGQRSTM (68 aa)) the chain is Cytoplasmic. Residue Lys225 participates in heme b binding. Position 232 is a phosphoserine (Ser232). The tract at residues 257 to 290 (SMDAADPADAESSSEGAARKRTLGLADSGQRSTM) is disordered. The segment covering 260–272 (AADPADAESSSEG) has biased composition (low complexity). Phosphothreonine is present on Thr289.

As to quaternary structure, homodimer. Heme b is required as a cofactor. In terms of tissue distribution, highly expressed in the brush-border membrane of duodenal enterocytes (at protein level). Also expressed in liver and spleen.

It localises to the cell membrane. It is found in the apical cell membrane. It catalyses the reaction Fe(3+)(out) + L-ascorbate(in) = monodehydro-L-ascorbate radical(in) + Fe(2+)(out) + H(+). It carries out the reaction Cu(2+)(out) + L-ascorbate(in) = Cu(+)(out) + monodehydro-L-ascorbate radical(in) + H(+). The enzyme catalyses monodehydro-L-ascorbate radical(out) + L-ascorbate(in) = monodehydro-L-ascorbate radical(in) + L-ascorbate(out). Its function is as follows. Plasma membrane reductase that uses cytoplasmic ascorbate as an electron donor to reduce extracellular Fe(3+) into Fe(2+). Probably functions in dietary iron absorption at the brush border of duodenal enterocytes by producing Fe(2+), the divalent form of iron that can be transported into enterocytes. It is also able to reduce extracellular monodehydro-L-ascorbate and may be involved in extracellular ascorbate regeneration by erythrocytes in blood. May also act as a ferrireductase in airway epithelial cells. May also function as a cupric transmembrane reductase. The polypeptide is Plasma membrane ascorbate-dependent reductase CYBRD1 (Mus musculus (Mouse)).